Reading from the N-terminus, the 444-residue chain is Trigger factor (444 aa).

Residues 170–255 enclose the PPIase FKBP-type domain; sequence NDIAVIDFVG…LKAIKQLEIT (86 aa).

This sequence belongs to the FKBP-type PPIase family. Tig subfamily.

The protein resides in the cytoplasm. The catalysed reaction is [protein]-peptidylproline (omega=180) = [protein]-peptidylproline (omega=0). Functionally, involved in protein export. Acts as a chaperone by maintaining the newly synthesized protein in an open conformation. Functions as a peptidyl-prolyl cis-trans isomerase. In Mycoplasma pneumoniae (strain ATCC 29342 / M129 / Subtype 1) (Mycoplasmoides pneumoniae), this protein is Trigger factor (tig).